A 536-amino-acid chain; its full sequence is Bifunctional purine biosynthesis protein PurH (536 aa).

The 151-residue stretch at 8–158 folds into the MGS-like domain; sequence IPAPDEVRIQ…KNHAYVTIVT (151 aa).

This sequence belongs to the PurH family.

It carries out the reaction (6R)-10-formyltetrahydrofolate + 5-amino-1-(5-phospho-beta-D-ribosyl)imidazole-4-carboxamide = 5-formamido-1-(5-phospho-D-ribosyl)imidazole-4-carboxamide + (6S)-5,6,7,8-tetrahydrofolate. It catalyses the reaction IMP + H2O = 5-formamido-1-(5-phospho-D-ribosyl)imidazole-4-carboxamide. It participates in purine metabolism; IMP biosynthesis via de novo pathway; 5-formamido-1-(5-phospho-D-ribosyl)imidazole-4-carboxamide from 5-amino-1-(5-phospho-D-ribosyl)imidazole-4-carboxamide (10-formyl THF route): step 1/1. It functions in the pathway purine metabolism; IMP biosynthesis via de novo pathway; IMP from 5-formamido-1-(5-phospho-D-ribosyl)imidazole-4-carboxamide: step 1/1. The polypeptide is Bifunctional purine biosynthesis protein PurH (Sinorhizobium fredii (strain NBRC 101917 / NGR234)).